The chain runs to 162 residues: tRNA (cytidine(34)-2'-O)-methyltransferase (162 aa).

Positions 83, 105, 127, and 135 each coordinate S-adenosyl-L-methionine.

This sequence belongs to the class IV-like SAM-binding methyltransferase superfamily. RNA methyltransferase TrmH family. TrmL subfamily. As to quaternary structure, homodimer.

It localises to the cytoplasm. It catalyses the reaction cytidine(34) in tRNA + S-adenosyl-L-methionine = 2'-O-methylcytidine(34) in tRNA + S-adenosyl-L-homocysteine + H(+). The enzyme catalyses 5-carboxymethylaminomethyluridine(34) in tRNA(Leu) + S-adenosyl-L-methionine = 5-carboxymethylaminomethyl-2'-O-methyluridine(34) in tRNA(Leu) + S-adenosyl-L-homocysteine + H(+). Functionally, methylates the ribose at the nucleotide 34 wobble position in the two leucyl isoacceptors tRNA(Leu)(CmAA) and tRNA(Leu)(cmnm5UmAA). Catalyzes the methyl transfer from S-adenosyl-L-methionine to the 2'-OH of the wobble nucleotide. In Photorhabdus asymbiotica subsp. asymbiotica (strain ATCC 43949 / 3105-77) (Xenorhabdus luminescens (strain 2)), this protein is tRNA (cytidine(34)-2'-O)-methyltransferase.